A 968-amino-acid chain; its full sequence is RNA polymerase-associated protein RapA (968 aa).

In terms of domain architecture, Helicase ATP-binding spans 164–334 (EVGQRHAPRV…FARLRLLDPD (171 aa)). 177-184 (DEVGLGKT) contributes to the ATP binding site. The short motif at 280-283 (DEAH) is the DEAH box element. In terms of domain architecture, Helicase C-terminal spans 490 to 644 (RVEWLLNYLV…TCPTGRTIYD (155 aa)).

Belongs to the SNF2/RAD54 helicase family. RapA subfamily. As to quaternary structure, interacts with the RNAP. Has a higher affinity for the core RNAP than for the holoenzyme. Its ATPase activity is stimulated by binding to RNAP.

Functionally, transcription regulator that activates transcription by stimulating RNA polymerase (RNAP) recycling in case of stress conditions such as supercoiled DNA or high salt concentrations. Probably acts by releasing the RNAP, when it is trapped or immobilized on tightly supercoiled DNA. Does not activate transcription on linear DNA. Probably not involved in DNA repair. The polypeptide is RNA polymerase-associated protein RapA (Yersinia pseudotuberculosis serotype O:1b (strain IP 31758)).